The following is a 335-amino-acid chain: Ketol-acid reductoisomerase (NADP(+)) (335 aa).

The KARI N-terminal Rossmann domain occupies 5 to 185; the sequence is SKIYTDKDSN…GATRAGVIPT (181 aa). NADP(+) is bound by residues 28-31, Ser56, and 86-89; these read YGSQ and DMVQ. His111 is an active-site residue. NADP(+) is bound at residue Gly137. One can recognise a KARI C-terminal knotted domain in the interval 186 to 331; sequence TFKEETETDL…NQLKDLIQKG (146 aa). Residues Asp194, Glu198, Glu230, and Glu234 each contribute to the Mg(2+) site. Ser255 contacts substrate.

It belongs to the ketol-acid reductoisomerase family. Mg(2+) serves as cofactor.

It catalyses the reaction (2R)-2,3-dihydroxy-3-methylbutanoate + NADP(+) = (2S)-2-acetolactate + NADPH + H(+). It carries out the reaction (2R,3R)-2,3-dihydroxy-3-methylpentanoate + NADP(+) = (S)-2-ethyl-2-hydroxy-3-oxobutanoate + NADPH + H(+). Its pathway is amino-acid biosynthesis; L-isoleucine biosynthesis; L-isoleucine from 2-oxobutanoate: step 2/4. It functions in the pathway amino-acid biosynthesis; L-valine biosynthesis; L-valine from pyruvate: step 2/4. Functionally, involved in the biosynthesis of branched-chain amino acids (BCAA). Catalyzes an alkyl-migration followed by a ketol-acid reduction of (S)-2-acetolactate (S2AL) to yield (R)-2,3-dihydroxy-isovalerate. In the isomerase reaction, S2AL is rearranged via a Mg-dependent methyl migration to produce 3-hydroxy-3-methyl-2-ketobutyrate (HMKB). In the reductase reaction, this 2-ketoacid undergoes a metal-dependent reduction by NADPH to yield (R)-2,3-dihydroxy-isovalerate. This chain is Ketol-acid reductoisomerase (NADP(+)), found in Saccharolobus islandicus (strain Y.G.57.14 / Yellowstone #1) (Sulfolobus islandicus).